A 955-amino-acid polypeptide reads, in one-letter code: Probable autotransporter YcgV (955 aa).

The tract at residues 616-659 (ASGTVPEPTPNPEPTPAPAQPPIVNPDPTPEPAPTPKPTTTADA) is disordered. Pro residues predominate over residues 622–652 (EPTPNPEPTPAPAQPPIVNPDPTPEPAPTPK). An Autotransporter domain is found at 687–955 (NQSKDGNIWL…QVNGGYRFSF (269 aa)).

Its function is as follows. Upon overexpression shows increased adherence to polyvinyl chloride (PVC) plates, increased mature biofilm formation. This chain is Probable autotransporter YcgV (ycgV), found in Escherichia coli (strain K12).